Reading from the N-terminus, the 248-residue chain is tRNA (guanine-N(1)-)-methyltransferase (248 aa).

Residues G113 and 133–138 (IGDFVL) contribute to the S-adenosyl-L-methionine site.

This sequence belongs to the RNA methyltransferase TrmD family. As to quaternary structure, homodimer.

It localises to the cytoplasm. The enzyme catalyses guanosine(37) in tRNA + S-adenosyl-L-methionine = N(1)-methylguanosine(37) in tRNA + S-adenosyl-L-homocysteine + H(+). Its function is as follows. Specifically methylates guanosine-37 in various tRNAs. This chain is tRNA (guanine-N(1)-)-methyltransferase, found in Dehalococcoides mccartyi (strain CBDB1).